Consider the following 58-residue polypeptide: Large ribosomal subunit protein bL32 (58 aa).

It belongs to the bacterial ribosomal protein bL32 family.

The chain is Large ribosomal subunit protein bL32 from Synechococcus sp. (strain WH7803).